The following is a 456-amino-acid chain: Palmitoyltransferase PFA4 (456 aa).

The Cytoplasmic segment spans residues 1-9 (MAARNWSRV). The chain crosses the membrane as a helical span at residues 10–30 (WVGGTVILISFIAFSSQIFVI). Over 31–37 (WPWYGRE) the chain is Lumenal. The chain crosses the membrane as a helical span at residues 38 to 58 (ISLDLLMLLVPLNLAAFMIFW). Over 59–138 (NYRLCVITSP…GNCVGFYNQG (80 aa)) the chain is Cytoplasmic. In terms of domain architecture, DHHC spans 95 to 145 (RYCKNCAHYKPPRAHHCRQCKTCWLKLDHHCPWIGNCVGFYNQGHFIRFLL). Residue C125 is the S-palmitoyl cysteine intermediate of the active site. A helical transmembrane segment spans residues 139–159 (HFIRFLLWVDIGTTFHLIIMV). Over 160–176 (RRVLYIAEYYHEPTLAD) the chain is Lumenal. Residues 177–197 (VLFLVFNFATCVPVWLCVGMF) traverse the membrane as a helical segment. Residues 198-456 (SIYHVYLACG…DPEEESGYTH (259 aa)) are Cytoplasmic-facing. A disordered region spans residues 284–377 (PPQDPSRLPN…YDHYDEGPMY (94 aa)). Positions 285–298 (PQDPSRLPNPPPIP) are enriched in pro residues. Residues 309–321 (NGFNPNLRPTNSL) are compositionally biased toward polar residues. The segment covering 337–352 (SHEQGRHYSSGDERDN) has biased composition (basic and acidic residues).

It belongs to the DHHC palmitoyltransferase family. PFA4 subfamily.

Its subcellular location is the endoplasmic reticulum membrane. The catalysed reaction is L-cysteinyl-[protein] + hexadecanoyl-CoA = S-hexadecanoyl-L-cysteinyl-[protein] + CoA. Mediates the reversible addition of palmitate to target proteins, thereby regulating their membrane association and biological function. Responsible for the modification of a subset of proteins that are critical in cryptococcal pathogenesis, with substrates involved in cell wall synthesis, signal transduction, and membrane trafficking. Palmitoylates chitin synthase CHS3. This is Palmitoyltransferase PFA4 from Cryptococcus neoformans var. grubii serotype A (strain H99 / ATCC 208821 / CBS 10515 / FGSC 9487) (Filobasidiella neoformans var. grubii).